A 416-amino-acid chain; its full sequence is GTPase ERA1, chloroplastic (416 aa).

A chloroplast-targeting transit peptide spans 1–53; sequence MELGLALRLVAPPPLLPCLSRRALSLPPDFVSSRVLRGRRIHASRLKHGAGVV. An Era-type G domain is found at 117–287; sequence RSGYVAVLGK…KEWILSKLPL (171 aa). Residues 125-132 are G1; it reads GKPNVGKS. 125–132 lines the GTP pocket; it reads GKPNVGKS. The segment at 151 to 155 is G2; sequence QTTRH. Residues 172–175 are G3; sequence DTPG. GTP is bound by residues 172–176 and 237–240; these read DTPGV and NKKD. A G4 region spans residues 237-240; sequence NKKD. Residues 266-268 are G5; it reads ISA. The KH type-2 domain occupies 318 to 395; sequence YRQEIPYSCQ…YLEVEVKVKE (78 aa).

Belongs to the TRAFAC class TrmE-Era-EngA-EngB-Septin-like GTPase superfamily. Era GTPase family.

The protein resides in the plastid. The protein localises to the chloroplast stroma. It localises to the chloroplast nucleoid. In terms of biological role, nuclear genome-encoded probable GTPase involved in ribosome biogenesis in chloroplasts. Plays a role in 16S rRNA maturation in plastids and may contribute to the assembly of the small (30S) ribosomal subunit. The chain is GTPase ERA1, chloroplastic from Zea mays (Maize).